We begin with the raw amino-acid sequence, 258 residues long: SLA class II histocompatibility antigen, DQ haplotype D beta chain (258 aa).

A signal peptide spans 1 to 31; it reads MVALRLPRGLWTAALTVMLVVLGAPVAEGRD. Residues 32–123 form a beta-1 region; the sequence is SPQDFVVQFK…IEEGTTLQRR (92 aa). Residues 32–227 lie on the Extracellular side of the membrane; the sequence is SPQDFVVQFK…RAQSESAQSK (196 aa). 2 disulfide bridges follow: Cys44–Cys108 and Cys146–Cys202. The N-linked (GlcNAc...) asparagine glycan is linked to Asn48. Residues 124 to 217 are beta-2; the sequence is VQPTVTISPS…SLQSPILVEW (94 aa). The Ig-like C1-type domain maps to 126–230; sequence PTVTISPSKA…SESAQSKMLS (105 aa). The interval 218 to 227 is connecting peptide; the sequence is RAQSESAQSK. A helical transmembrane segment spans residues 228 to 248; that stretch reads MLSGVGGFVLGLIFLGLGLFI. Residues 249–258 are Cytoplasmic-facing; the sequence is RHRSQKGLVR.

Belongs to the MHC class II family.

It localises to the membrane. The sequence is that of SLA class II histocompatibility antigen, DQ haplotype D beta chain from Sus scrofa (Pig).